An 883-amino-acid polypeptide reads, in one-letter code: Alanine--tRNA ligase (883 aa).

Zn(2+)-binding residues include His-563, His-567, Cys-673, and His-677.

Belongs to the class-II aminoacyl-tRNA synthetase family. Zn(2+) is required as a cofactor.

Its subcellular location is the cytoplasm. It catalyses the reaction tRNA(Ala) + L-alanine + ATP = L-alanyl-tRNA(Ala) + AMP + diphosphate. Functionally, catalyzes the attachment of alanine to tRNA(Ala) in a two-step reaction: alanine is first activated by ATP to form Ala-AMP and then transferred to the acceptor end of tRNA(Ala). Also edits incorrectly charged Ser-tRNA(Ala) and Gly-tRNA(Ala) via its editing domain. In Caulobacter sp. (strain K31), this protein is Alanine--tRNA ligase.